Here is a 240-residue protein sequence, read N- to C-terminus: 2,3,4,5-tetrahydropyridine-2,6-dicarboxylate N-acetyltransferase (240 aa).

Belongs to the transferase hexapeptide repeat family. DapH subfamily.

It carries out the reaction (S)-2,3,4,5-tetrahydrodipicolinate + acetyl-CoA + H2O = L-2-acetamido-6-oxoheptanedioate + CoA. It functions in the pathway amino-acid biosynthesis; L-lysine biosynthesis via DAP pathway; LL-2,6-diaminopimelate from (S)-tetrahydrodipicolinate (acetylase route): step 1/3. Its function is as follows. Catalyzes the transfer of an acetyl group from acetyl-CoA to tetrahydrodipicolinate. This chain is 2,3,4,5-tetrahydropyridine-2,6-dicarboxylate N-acetyltransferase, found in Bacillus anthracis (strain A0248).